The following is a 31-amino-acid chain: Cytochrome b6-f complex subunit 6 (31 aa).

Residues 4 to 24 (LLSYFGFLFAILTLTSVLFIG) form a helical membrane-spanning segment.

This sequence belongs to the PetL family. The 4 large subunits of the cytochrome b6-f complex are cytochrome b6, subunit IV (17 kDa polypeptide, PetD), cytochrome f and the Rieske protein, while the 4 small subunits are PetG, PetL, PetM and PetN. The complex functions as a dimer.

It localises to the plastid. It is found in the chloroplast thylakoid membrane. Component of the cytochrome b6-f complex, which mediates electron transfer between photosystem II (PSII) and photosystem I (PSI), cyclic electron flow around PSI, and state transitions. PetL is important for photoautotrophic growth as well as for electron transfer efficiency and stability of the cytochrome b6-f complex. This chain is Cytochrome b6-f complex subunit 6, found in Angiopteris evecta (Mule's foot fern).